Here is a 128-residue protein sequence, read N- to C-terminus: Small ribosomal subunit protein uS11 (128 aa).

The protein belongs to the universal ribosomal protein uS11 family. Part of the 30S ribosomal subunit. Interacts with proteins S7 and S18. Binds to IF-3.

Functionally, located on the platform of the 30S subunit, it bridges several disparate RNA helices of the 16S rRNA. Forms part of the Shine-Dalgarno cleft in the 70S ribosome. This chain is Small ribosomal subunit protein uS11, found in Desulfatibacillum aliphaticivorans.